A 289-amino-acid polypeptide reads, in one-letter code: MDPAERAQAARARVPRIDPYGFERPEDFDYAAYEEFFSTYLVILTKRAIKWSKLLKGSGGVRKSVTDLNRTFPDNVMFRKTADPCLQKTLYNVLLAYGLHNQDVGYCQGMNFIAGYLILITKNEEESFWLLDALVGRILPDYYSPAMLGLKTDQEVLAELVRMKLPAVAALMDGHGVLWTLLVSRWFICLFVDILPVETVLRIWDCLFNEGSKIIFRVALTLIKQHQEFILEASSVPDICDKFKQITKGDFVTECHTFMQKIFSEPGSLSMATITRLRESCRAALQAQS.

The region spanning 41-211 (LVILTKRAIK…RIWDCLFNEG (171 aa)) is the Rab-GAP TBC domain.

In terms of biological role, may act as a GTPase-activating protein for Rab family protein(s). The chain is Growth hormone-regulated TBC protein 1 (Grtp1) from Rattus norvegicus (Rat).